A 166-amino-acid chain; its full sequence is Phosphopantetheine adenylyltransferase (166 aa).

Thr-9 contacts substrate. Residues 9–10 (TF) and His-17 contribute to the ATP site. Lys-41, Leu-73, and Arg-87 together coordinate substrate. ATP is bound by residues 88-90 (GLR), Glu-98, and 123-129 (YQFISGT).

The protein belongs to the bacterial CoaD family. In terms of assembly, homohexamer. Requires Mg(2+) as cofactor.

It localises to the cytoplasm. It carries out the reaction (R)-4'-phosphopantetheine + ATP + H(+) = 3'-dephospho-CoA + diphosphate. It participates in cofactor biosynthesis; coenzyme A biosynthesis; CoA from (R)-pantothenate: step 4/5. Its function is as follows. Reversibly transfers an adenylyl group from ATP to 4'-phosphopantetheine, yielding dephospho-CoA (dPCoA) and pyrophosphate. The sequence is that of Phosphopantetheine adenylyltransferase from Burkholderia mallei (strain NCTC 10229).